A 242-amino-acid chain; its full sequence is Ubiquinone biosynthesis O-methyltransferase (242 aa).

Arginine 44, glycine 64, aspartate 85, and methionine 129 together coordinate S-adenosyl-L-methionine.

The protein belongs to the methyltransferase superfamily. UbiG/COQ3 family.

It carries out the reaction a 3-demethylubiquinol + S-adenosyl-L-methionine = a ubiquinol + S-adenosyl-L-homocysteine + H(+). The catalysed reaction is a 3-(all-trans-polyprenyl)benzene-1,2-diol + S-adenosyl-L-methionine = a 2-methoxy-6-(all-trans-polyprenyl)phenol + S-adenosyl-L-homocysteine + H(+). It participates in cofactor biosynthesis; ubiquinone biosynthesis. O-methyltransferase that catalyzes the 2 O-methylation steps in the ubiquinone biosynthetic pathway. The sequence is that of Ubiquinone biosynthesis O-methyltransferase from Yersinia pseudotuberculosis serotype O:1b (strain IP 31758).